Reading from the N-terminus, the 63-residue chain is DNA-directed RNA polymerase 7 kDa subunit (63 aa).

Belongs to the poxviridae DNA-directed RNA polymerase 7 kDa subunit family. As to quaternary structure, the DNA-dependent RNA polymerase used for intermediate and late genes expression consists of eight subunits 147 kDa, 133 kDa, 35 kDa, 30 kDa, 22 kDa, 19 kDa, 18 kDa and 7 kDa totalling more than 500 kDa in mass. The same holoenzyme, with the addition of the transcription-specificity factor RAP94, is used for early gene expression.

The protein localises to the virion. It catalyses the reaction RNA(n) + a ribonucleoside 5'-triphosphate = RNA(n+1) + diphosphate. Functionally, part of the DNA-dependent RNA polymerase which catalyzes the transcription of viral DNA into RNA using the four ribonucleoside triphosphates as substrates. Responsible for the transcription of early, intermediate and late genes. DNA-dependent RNA polymerase associates with the early transcription factor (ETF) thereby allowing the early genes transcription. Late transcription, and probably also intermediate transcription, require newly synthesized RNA polymerase. This chain is DNA-directed RNA polymerase 7 kDa subunit (RPO7), found in Myxoma virus (strain Lausanne) (MYXV).